Consider the following 167-residue polypeptide: Cytochrome b6-f complex subunit 4 (167 aa).

The next 3 helical transmembrane spans lie at 36-56 (LLYI…GLAV), 95-115 (LLGV…PFLE), and 131-151 (TVFL…TLPI).

Belongs to the cytochrome b family. PetD subfamily. The 4 large subunits of the cytochrome b6-f complex are cytochrome b6, subunit IV (17 kDa polypeptide, petD), cytochrome f and the Rieske protein, while the 4 small subunits are petG, petL, petM and petN. The complex functions as a dimer.

The protein resides in the plastid. Its subcellular location is the chloroplast thylakoid membrane. Component of the cytochrome b6-f complex, which mediates electron transfer between photosystem II (PSII) and photosystem I (PSI), cyclic electron flow around PSI, and state transitions. In Calycanthus floridus var. glaucus (Eastern sweetshrub), this protein is Cytochrome b6-f complex subunit 4.